The following is a 216-amino-acid chain: Adenylate kinase (216 aa).

Residue 10–15 participates in ATP binding; that stretch reads GAGKGT. The tract at residues 30–59 is NMP; that stretch reads STGDMLRAAVKAGTELGIKAKSIMDAGGLV. AMP-binding positions include T31, R36, 57-59, 85-88, and Q92; these read GLV and GFPR. Positions 122-159 are LID; it reads GRRVHEASGRVYHIVYNPPKIAGKDDITGEELVQRKDD. Residues R123 and 132–133 each bind ATP; that span reads VY. Residues R156 and R167 each contribute to the AMP site. ATP is bound at residue G202.

The protein belongs to the adenylate kinase family. As to quaternary structure, monomer.

Its subcellular location is the cytoplasm. The enzyme catalyses AMP + ATP = 2 ADP. It functions in the pathway purine metabolism; AMP biosynthesis via salvage pathway; AMP from ADP: step 1/1. Catalyzes the reversible transfer of the terminal phosphate group between ATP and AMP. Plays an important role in cellular energy homeostasis and in adenine nucleotide metabolism. In Pseudomonas fluorescens (strain Pf0-1), this protein is Adenylate kinase.